We begin with the raw amino-acid sequence, 147 residues long: Leghemoglobin 8 (147 aa).

Residues 2 to 147 (GFTEKQESLV…LAASIKKSMS (146 aa)) form the Globin domain. Nitrated tyrosine is present on residues Y25 and Y30. S45 lines the heme b pocket. The residue at position 45 (S45) is a Phosphoserine. H62 is an O2 binding site. 3 residues coordinate heme b: K65, H94, and K97. The residue at position 135 (Y135) is a Nitrated tyrosine.

It belongs to the plant globin family. Monomer. Interacts with CAS31 in the cytoplasm; this interaction leads to its protection from denaturation under thermal and drought stresses. In terms of processing, nitrated in effective nodules and particularly in hypoxic conditions; this mechanism may play a protective role in the symbiosis by buffering toxic peroxynitrite NO(2)(-). Nitration level decrease during nodule senescence. Phosphorylation at Ser-45 disrupts the molecular environment of its porphyrin ring oxygen binding pocket, thus leading to a reduced oxygen consumption and to the delivery of oxygen O(2) to symbiosomes. In terms of tissue distribution, root nodules.

The protein localises to the cytoplasm. Its subcellular location is the nucleus. Leghemoglobin that reversibly binds oxygen O(2) through a pentacoordinated heme iron. In root nodules, facilitates the diffusion of oxygen to the bacteroids while preventing the bacterial nitrogenase from being inactivated by buffering dioxygen, nitric oxide and carbon monoxide, and promoting the formation of reactive oxygen species (ROS, e.g. H(2)O(2)). This role is essential for symbiotic nitrogen fixation (SNF). This chain is Leghemoglobin 8, found in Medicago truncatula (Barrel medic).